Reading from the N-terminus, the 422-residue chain is Probable protease eep (422 aa).

Residue His-18 participates in Zn(2+) binding. Glu-19 is a catalytic residue. His-22 contributes to the Zn(2+) binding site. 3 helical membrane passes run 176-196 (FAGPMNNFILGFILFTLAVFL), 349-369 (VVFLMAMLSMNLGIINLLPIP), and 394-414 (EGIITLIGFGFVMVLMVLVTW). The PDZ domain occupies 179-273 (PMNNFILGFI…EEQLTVTPEK (95 aa)).

Belongs to the peptidase M50B family. Zn(2+) is required as a cofactor.

The protein localises to the cell membrane. Functionally, involved in production of the peptide pheromone cAD1. This is Probable protease eep (eep) from Enterococcus faecalis (strain ATCC 700802 / V583).